Consider the following 461-residue polypeptide: tRNA (guanine(10)-N(2))-methyltransferase TRMT11 (461 aa).

Belongs to the class I-like SAM-binding methyltransferase superfamily. TRM11 methyltransferase family. In terms of assembly, part of the heterodimeric TRMT11-TRM112 methyltransferase complex; this complex forms an active tRNA methyltransferase, where TRMT112 acts as an activator of the catalytic subunit TRMT11.

It is found in the cytoplasm. It catalyses the reaction guanosine(10) in tRNA + S-adenosyl-L-methionine = N(2)-methylguanosine(10) in tRNA + S-adenosyl-L-homocysteine + H(+). Functionally, catalytic subunit of the TRMT11-TRM112 methyltransferase complex, that specifically mediates the S-adenosyl-L-methionine-dependent N(2)-methylation of guanosine nucleotide at position 10 (m2G10) in tRNAs. This is one of the major tRNA (guanine-N(2))-methyltransferases. The protein is tRNA (guanine(10)-N(2))-methyltransferase TRMT11 of Gallus gallus (Chicken).